The chain runs to 368 residues: Glucose 1-dehydrogenase 2 (368 aa).

C41 is a binding site for Zn(2+). A substrate-binding site is contributed by T43. Zn(2+) contacts are provided by H68 and E69. Substrate is bound at residue N91. Zn(2+)-binding residues include C95, C98, C101, C109, and Q152. Residues Q152 and D156 each contribute to the substrate site. NADP(+) is bound by residues 213 to 215, 279 to 281, 307 to 309, and K356; these read NRR, FGF, and LDN. Substrate is bound at residue N309.

The protein belongs to the zinc-containing alcohol dehydrogenase family. Glucose 1-dehydrogenase subfamily. Requires Zn(2+) as cofactor.

The catalysed reaction is D-glucose + NAD(+) = D-glucono-1,5-lactone + NADH + H(+). It catalyses the reaction D-glucose + NADP(+) = D-glucono-1,5-lactone + NADPH + H(+). In terms of biological role, catalyzes the NAD(P)(+)-dependent oxidation of D-glucose to D-gluconate via gluconolactone. Can utilize both NAD(+) and NADP(+) as electron acceptor. Is involved in the degradation of glucose through a non-phosphorylative variant of the Entner-Doudoroff pathway. In Saccharolobus solfataricus (strain ATCC 35092 / DSM 1617 / JCM 11322 / P2) (Sulfolobus solfataricus), this protein is Glucose 1-dehydrogenase 2.